The chain runs to 555 residues: CTP synthase (555 aa).

The amidoligase domain stretch occupies residues 1-267; it reads MAKFVFVTGG…CKEVLDCLDL (267 aa). Residue serine 13 coordinates CTP. Residue serine 13 participates in UTP binding. Residues 14–19 and aspartate 71 contribute to the ATP site; that span reads SIGKGI. Residues aspartate 71 and glutamate 141 each coordinate Mg(2+). CTP contacts are provided by residues 148–150, 188–193, and lysine 224; these read DIE and KTKPTQ. UTP is bound by residues 188–193 and lysine 224; that span reads KTKPTQ. A Glutamine amidotransferase type-1 domain is found at 292–534; the sequence is KVALVGKYVQ…IQAAQIRVPS (243 aa). Position 354 (glycine 354) interacts with L-glutamine. Catalysis depends on cysteine 381, which acts as the Nucleophile; for glutamine hydrolysis. L-glutamine contacts are provided by residues 382–385, glutamate 405, and arginine 462; that span reads LGMQ. Active-site residues include histidine 507 and glutamate 509. Residues 536–555 are disordered; that stretch reads PSEAFNPQSKIIEKKSLEQQ. Residues 546-555 show a composition bias toward basic and acidic residues; the sequence is IIEKKSLEQQ.

It belongs to the CTP synthase family. In terms of assembly, homotetramer.

The catalysed reaction is UTP + L-glutamine + ATP + H2O = CTP + L-glutamate + ADP + phosphate + 2 H(+). It catalyses the reaction L-glutamine + H2O = L-glutamate + NH4(+). The enzyme catalyses UTP + NH4(+) + ATP = CTP + ADP + phosphate + 2 H(+). It participates in pyrimidine metabolism; CTP biosynthesis via de novo pathway; CTP from UDP: step 2/2. Allosterically activated by GTP, when glutamine is the substrate; GTP has no effect on the reaction when ammonia is the substrate. The allosteric effector GTP functions by stabilizing the protein conformation that binds the tetrahedral intermediate(s) formed during glutamine hydrolysis. Inhibited by the product CTP, via allosteric rather than competitive inhibition. Its function is as follows. Catalyzes the ATP-dependent amination of UTP to CTP with either L-glutamine or ammonia as the source of nitrogen. Regulates intracellular CTP levels through interactions with the four ribonucleotide triphosphates. The polypeptide is CTP synthase (Prochlorococcus marinus (strain NATL1A)).